We begin with the raw amino-acid sequence, 99 residues long: Pterin-4-alpha-carbinolamine dehydratase (99 aa).

The protein belongs to the pterin-4-alpha-carbinolamine dehydratase family.

It carries out the reaction (4aS,6R)-4a-hydroxy-L-erythro-5,6,7,8-tetrahydrobiopterin = (6R)-L-erythro-6,7-dihydrobiopterin + H2O. Functionally, involved in tetrahydrobiopterin biosynthesis. This is Pterin-4-alpha-carbinolamine dehydratase (pcbd) from Dictyostelium discoideum (Social amoeba).